A 314-amino-acid polypeptide reads, in one-letter code: 4-hydroxy-3-methylbut-2-enyl diphosphate reductase (314 aa).

Cys-12 provides a ligand contact to [4Fe-4S] cluster. The (2E)-4-hydroxy-3-methylbut-2-enyl diphosphate site is built by His-43 and His-81. Dimethylallyl diphosphate-binding residues include His-43 and His-81. The isopentenyl diphosphate site is built by His-43 and His-81. Cys-103 is a binding site for [4Fe-4S] cluster. His-131 is a (2E)-4-hydroxy-3-methylbut-2-enyl diphosphate binding site. His-131 is a binding site for dimethylallyl diphosphate. Position 131 (His-131) interacts with isopentenyl diphosphate. The Proton donor role is filled by Glu-133. A (2E)-4-hydroxy-3-methylbut-2-enyl diphosphate-binding site is contributed by Thr-170. [4Fe-4S] cluster is bound at residue Cys-198. Ser-226, Asn-228, and Ser-271 together coordinate (2E)-4-hydroxy-3-methylbut-2-enyl diphosphate. Ser-226, Asn-228, and Ser-271 together coordinate dimethylallyl diphosphate. Isopentenyl diphosphate is bound by residues Ser-226, Asn-228, and Ser-271.

The protein belongs to the IspH family. The cofactor is [4Fe-4S] cluster.

The catalysed reaction is isopentenyl diphosphate + 2 oxidized [2Fe-2S]-[ferredoxin] + H2O = (2E)-4-hydroxy-3-methylbut-2-enyl diphosphate + 2 reduced [2Fe-2S]-[ferredoxin] + 2 H(+). The enzyme catalyses dimethylallyl diphosphate + 2 oxidized [2Fe-2S]-[ferredoxin] + H2O = (2E)-4-hydroxy-3-methylbut-2-enyl diphosphate + 2 reduced [2Fe-2S]-[ferredoxin] + 2 H(+). Its pathway is isoprenoid biosynthesis; dimethylallyl diphosphate biosynthesis; dimethylallyl diphosphate from (2E)-4-hydroxy-3-methylbutenyl diphosphate: step 1/1. It participates in isoprenoid biosynthesis; isopentenyl diphosphate biosynthesis via DXP pathway; isopentenyl diphosphate from 1-deoxy-D-xylulose 5-phosphate: step 6/6. In terms of biological role, catalyzes the conversion of 1-hydroxy-2-methyl-2-(E)-butenyl 4-diphosphate (HMBPP) into a mixture of isopentenyl diphosphate (IPP) and dimethylallyl diphosphate (DMAPP). Acts in the terminal step of the DOXP/MEP pathway for isoprenoid precursor biosynthesis. This chain is 4-hydroxy-3-methylbut-2-enyl diphosphate reductase, found in Bacillus pumilus (strain SAFR-032).